The chain runs to 374 residues: Eukaryotic translation initiation factor 3 subunit M (374 aa).

S2 is subject to N-acetylserine. S2 and S152 each carry phosphoserine. In terms of domain architecture, PCI spans 180–339; the sequence is AASKVMVELL…RKVVVSHSTH (160 aa). The residue at position 254 (K254) is an N6-acetyllysine. A Phosphoserine modification is found at S367.

It belongs to the eIF-3 subunit M family. Component of the eukaryotic translation initiation factor 3 (eIF-3) complex, which is composed of 13 subunits: EIF3A, EIF3B, EIF3C, EIF3D, EIF3E, EIF3F, EIF3G, EIF3H, EIF3I, EIF3J, EIF3K, EIF3L and EIF3M. The eIF-3 complex appears to include 3 stable modules: module A is composed of EIF3A, EIF3B, EIF3G and EIF3I; module B is composed of EIF3F, EIF3H, and EIF3M; and module C is composed of EIF3C, EIF3D, EIF3E, EIF3K and EIF3L. EIF3C of module C binds EIF3B of module A and EIF3H of module B, thereby linking the three modules. EIF3J is a labile subunit that binds to the eIF-3 complex via EIF3B. The eIF-3 complex interacts with RPS6KB1 under conditions of nutrient depletion. Mitogenic stimulation leads to binding and activation of a complex composed of MTOR and RPTOR, leading to phosphorylation and release of RPS6KB1 and binding of EIF4B to eIF-3.

Its subcellular location is the cytoplasm. Component of the eukaryotic translation initiation factor 3 (eIF-3) complex, which is required for several steps in the initiation of protein synthesis. The eIF-3 complex associates with the 40S ribosome and facilitates the recruitment of eIF-1, eIF-1A, eIF-2:GTP:methionyl-tRNAi and eIF-5 to form the 43S pre-initiation complex (43S PIC). The eIF-3 complex stimulates mRNA recruitment to the 43S PIC and scanning of the mRNA for AUG recognition. The eIF-3 complex is also required for disassembly and recycling of post-termination ribosomal complexes and subsequently prevents premature joining of the 40S and 60S ribosomal subunits prior to initiation. The eIF-3 complex specifically targets and initiates translation of a subset of mRNAs involved in cell proliferation, including cell cycling, differentiation and apoptosis, and uses different modes of RNA stem-loop binding to exert either translational activation or repression. The chain is Eukaryotic translation initiation factor 3 subunit M from Pongo abelii (Sumatran orangutan).